We begin with the raw amino-acid sequence, 345 residues long: Fe(3+) ions import ATP-binding protein FbpC (345 aa).

The ABC transporter domain occupies 4–236 (LELHGIGKSY…PVDEPTASFL (233 aa)). 36–43 (GPSGSGKT) is a binding site for ATP.

The protein belongs to the ABC transporter superfamily. Fe(3+) ion importer (TC 3.A.1.10) family. In terms of assembly, the complex is composed of two ATP-binding proteins (FbpC), two transmembrane proteins (FbpB) and a solute-binding protein (FbpA).

The protein localises to the cell inner membrane. The catalysed reaction is Fe(3+)(out) + ATP + H2O = Fe(3+)(in) + ADP + phosphate + H(+). Functionally, part of the ABC transporter complex FbpABC involved in Fe(3+) ions import. Responsible for energy coupling to the transport system. This Serratia marcescens protein is Fe(3+) ions import ATP-binding protein FbpC.